The sequence spans 54 residues: uncharacterized protein (54 aa).

A helical membrane pass occupies residues 21–43 (SYVVCLYMCGSDCACICVLACVV).

The protein resides in the membrane. This is an uncharacterized protein from Saccharomyces cerevisiae (strain ATCC 204508 / S288c) (Baker's yeast).